The primary structure comprises 217 residues: Peptide methionine sulfoxide reductase MsrA (217 aa).

Residue cysteine 54 is part of the active site.

This sequence belongs to the MsrA Met sulfoxide reductase family.

The catalysed reaction is L-methionyl-[protein] + [thioredoxin]-disulfide + H2O = L-methionyl-(S)-S-oxide-[protein] + [thioredoxin]-dithiol. It carries out the reaction [thioredoxin]-disulfide + L-methionine + H2O = L-methionine (S)-S-oxide + [thioredoxin]-dithiol. Has an important function as a repair enzyme for proteins that have been inactivated by oxidation. Catalyzes the reversible oxidation-reduction of methionine sulfoxide in proteins to methionine. The sequence is that of Peptide methionine sulfoxide reductase MsrA from Maricaulis maris (strain MCS10) (Caulobacter maris).